Reading from the N-terminus, the 201-residue chain is Holliday junction branch migration complex subunit RuvA (201 aa).

The domain I stretch occupies residues 1 to 63; the sequence is MIAYIKGTLN…EDAQILFGFQ (63 aa). The interval 64-142 is domain II; it reads NRDEKYLFTK…SVFSITDEQQ (79 aa). The flexible linker stretch occupies residues 143–149; that stretch reads KSSVSNV. The domain III stretch occupies residues 150-201; that stretch reads NNNEVYSEAMEALKALGYTDKEVKQVLPHLKKDNDALSVDEAIRKALALLAK.

The protein belongs to the RuvA family. Homotetramer. Forms an RuvA(8)-RuvB(12)-Holliday junction (HJ) complex. HJ DNA is sandwiched between 2 RuvA tetramers; dsDNA enters through RuvA and exits via RuvB. An RuvB hexamer assembles on each DNA strand where it exits the tetramer. Each RuvB hexamer is contacted by two RuvA subunits (via domain III) on 2 adjacent RuvB subunits; this complex drives branch migration. In the full resolvosome a probable DNA-RuvA(4)-RuvB(12)-RuvC(2) complex forms which resolves the HJ.

It is found in the cytoplasm. Functionally, the RuvA-RuvB-RuvC complex processes Holliday junction (HJ) DNA during genetic recombination and DNA repair, while the RuvA-RuvB complex plays an important role in the rescue of blocked DNA replication forks via replication fork reversal (RFR). RuvA specifically binds to HJ cruciform DNA, conferring on it an open structure. The RuvB hexamer acts as an ATP-dependent pump, pulling dsDNA into and through the RuvAB complex. HJ branch migration allows RuvC to scan DNA until it finds its consensus sequence, where it cleaves and resolves the cruciform DNA. In Oceanobacillus iheyensis (strain DSM 14371 / CIP 107618 / JCM 11309 / KCTC 3954 / HTE831), this protein is Holliday junction branch migration complex subunit RuvA.